Consider the following 251-residue polypeptide: MKVIFNADDFGLTQGVNNGIVKSHQDGVVKSTTMMVGMDAEQNAIELAHQNPDLKIGVHLRFTAGAPLTEHPNLTNGRTHFVKYSELWNKQDFEAQAVYDEAKAQIDHFLSLGLTLSHLDSHHHAHTHPQILPIVQKLAKEHRVPLRGSGICHQPMTTSYFFTDEFYDQKVSLDGLMQHLLSLKENYDVVEVMCHPAYADQPLIMKSGYALQRELELQVLTSPILKEQLAQHGIAVTDYSALVSTSQVVGV.

The Mg(2+) site is built by His59 and His122.

This sequence belongs to the YdjC deacetylase family. In terms of assembly, homodimer. Mg(2+) serves as cofactor.

Its function is as follows. Probably catalyzes the deacetylation of acetylated carbohydrates an important step in the degradation of oligosaccharides. The protein is Carbohydrate deacetylase of Vibrio parahaemolyticus serotype O3:K6 (strain RIMD 2210633).